We begin with the raw amino-acid sequence, 1046 residues long: MASSVGNVADSTEPTKRMLSFQGLAELAHREYQAGDFEAAERHCMQLWRQEPDNTGVLLLLSSIHFQCRRLDRSAHFSTLAIKQNPLLAEAYSNLGNVYKERGQLQEAIEHYRHALRLKPDFIDGYINLAAALVAAGDMEGAVQAYVSALQYNPDLYCVRSDLGNLLKALGRLEEAKACYLKAIETQPNFAVAWSNLGCVFNAQGEIWLAIHHFEKAVTLDPNFLDAYINLGNVLKEARIFDRAVAAYLRALSLSPNHAVVHGNLACVYYEQGLIDLAIDTYRRAIELQPHFPDAYCNLANALKEKGSVAEAEDCYNTALRLCPTHADSLNNLANIKREQGNIEEAVRLYRKALEVFPEFAAAHSNLASVLQQQGKLQEALMHYKEAIRISPTFADAYSNMGNTLKEMQDVQGALQCYTRAIQINPAFADAHSNLASIHKDSGNIPEAIASYRTALKLKPDFPDAYCNLAHCLQIVCDWTDYDERMKKLVSIVADQLEKNRLPSVHPHHSMLYPLSHGFRKAIAERHGNLCLDKINVLHKPPYEHPKDLKLSDGRLRVGYVSSDFGNHPTSHLMQSIPGMHNPDKFEVFCYALSPDDGTNFRVKVMAEANHFIDLSQIPCNGKAADRIHQDGIHILVNMNGYTKGARNELFALRPAPIQAMWLGYPGTSGALFMDYIITDQETSPAEVAEQYSEKLAYMPHTFFIGDHANMFPHLKKKAVIDFKSNGHIYDNRIVLNGIDLKAFLDSLPDVKIVKMKCPDGGDNADSSNTALNMPVIPMNTIAEAVIEMINRGQIQITINGFSISNGLATTQINNKAATGEEVPRTIIVTTRSQYGLPEDAIVYCNFNQLYKIDPSTLQMWANILKRVPNSVLWLLRFPAVGEPNIQQYAQNMGLPQNRIIFSPVAPKEEHVRRGQLADVCLDTPLCNGHTTGMDVLWAGTPMVTMPGETLASRVAASQLTCLGCLELIAKNRQEYEDIAVKLGTDLEYLKKIRGKVWKQRISSPLFNTKQYTMELERLYLQMWEHYAAGNKPDHMIKPVEVTESA.

The residue at position 2 (Ala-2) is an N-acetylalanine. Phosphoserine; by GSK3-beta; alternate occurs at positions 3 and 4. Residues Ser-3 and Ser-4 are each glycosylated (O-linked (GlcNAc) serine; alternate). Ser-20 is modified (phosphoserine). TPR repeat units follow at residues 21 to 54, 89 to 122, 123 to 156, 157 to 190, 191 to 224, 225 to 258, 259 to 292, 293 to 326, 327 to 360, 361 to 394, 395 to 428, and 429 to 462; these read FQGL…EPDN, AEAY…KPDF, IDGY…NPDL, YCVR…QPNF, AVAW…DPNF, LDAY…SPNH, AVVH…QPHF, PDAY…CPTH, ADSL…FPEF, AAAH…SPTF, ADAY…NPAF, and ADAH…KPDF. An O-linked (GlcNAc) serine; by autocatalysis glycan is attached at Ser-399. The residue at position 454 (Thr-454) is a Phosphothreonine. One copy of the TPR 13; truncated repeat lies at 463–473; that stretch reads PDAYCNLAHCL. Positions 464–466 match the DFP motif motif; sequence DAY. Positions 487 to 503 match the Nuclear localization signal motif; sequence KKLVSIVADQLEKNRLP. The Proton acceptor role is filled by His-508. UDP contacts are provided by residues Gln-849, Lys-852, 906–908, 911–914, 930–932, and Asp-935; these read APK, HVRR, and HTT. The residue at position 989 (Tyr-989) is a Phosphotyrosine. The tract at residues 991–1010 is required for phosphatidylinositol 3,4,5-triphosphate binding; it reads KKIRGKVWKQRISSPLFNTK.

This sequence belongs to the glycosyltransferase 41 family. O-GlcNAc transferase subfamily. As to quaternary structure, monomer; may exist in different oligomerization states in cells. Homotrimer, oligomerizes via TPR repeats 6 and 7. Trimerization is not necessary for activity in vitro, however it increases affinity for UDP-GlcNAc. Component of a THAP1/THAP3-HCFC1-OGT complex. Component of the NSL complex at least composed of MOF/KAT8, KANSL1, KANSL2, KANSL3, MCRS1, PHF20, OGT1/OGT, WDR5 and HCFC1. Found in a complex with KIF5B, RHOT1, RHOT2 and TRAK1. Found in a complex composed of at least SINHCAF, SIN3A, HDAC1, SAP30, RBBP4, OGT and TET1. Component of a complex composed of KMT2E/MLL5, OGT and USP7; the complex stabilizes KMT2E/MLL5, preventing KMT2E/MLL5 ubiquitination and proteasomal-mediated degradation. Interacts (via TPRs 1-6) with SIN3A; the interaction mediates transcriptional repression in parallel with histone deacetylase. Interacts (via TPR 5-6) with TET1, TET2 and TET3. Interacts (via TPR repeats 6 and 7) with ATXN10. Interacts with NSD2. Interacts with PROSER1; this interaction mediates TET2 O-GlcNAcylation and stability by promoting the interaction between OGT and TET2. In terms of processing, ubiquitinated by the SCF(FBXO31) complex, leading to its proteasomal degradation. Phosphorylation on Ser-3 or Ser-4 by GSK3-beta positively regulates its activity. Phosphorylation at Thr-454 by AMPK promotes nuclear localization. Post-translationally, glycosylated via autocatalysis; O-GlcNAcylation at Ser-399 promotes nuclear localization.

It is found in the nucleus. The protein resides in the cytoplasm. The enzyme catalyses L-seryl-[protein] + UDP-N-acetyl-alpha-D-glucosamine = 3-O-(N-acetyl-beta-D-glucosaminyl)-L-seryl-[protein] + UDP + H(+). The catalysed reaction is L-threonyl-[protein] + UDP-N-acetyl-alpha-D-glucosamine = 3-O-(N-acetyl-beta-D-glucosaminyl)-L-threonyl-[protein] + UDP + H(+). The protein operates within protein modification; protein glycosylation. With respect to regulation, inhibited by UDP. Functionally, catalyzes the transfer of a single N-acetylglucosamine from UDP-GlcNAc to a serine or threonine residue in cytoplasmic and nuclear proteins resulting in their modification with a beta-linked N-acetylglucosamine (O-GlcNAc). Glycosylates a large and diverse number of proteins including histone H2B, AKT1, AMPK, ATG4B, CAPRIN1, EZH2, FNIP1, GSDMD, KRT7, LMNA, LMNB1, LMNB2, RPTOR, HOXA1, PFKL, KMT2E/MLL5, MAPT/TAU, TET2, RBL2, RET, NOD2 and HCFC1. Can regulate their cellular processes via cross-talk between glycosylation and phosphorylation or by affecting proteolytic processing. Involved in insulin resistance in muscle and adipocyte cells via glycosylating insulin signaling components and inhibiting the 'Thr-308' phosphorylation of AKT1, enhancing IRS1 phosphorylation and attenuating insulin signaling. Involved in glycolysis regulation by mediating glycosylation of 6-phosphofructokinase PFKL, inhibiting its activity. Plays a key role in chromatin structure by mediating O-GlcNAcylation of 'Ser-112' of histone H2B: recruited to CpG-rich transcription start sites of active genes via its interaction with TET proteins (TET1, TET2 or TET3). As part of the NSL complex indirectly involved in acetylation of nucleosomal histone H4 on several lysine residues. O-GlcNAcylation of 'Ser-75' of EZH2 increases its stability, and facilitating the formation of H3K27me3 by the PRC2/EED-EZH2 complex. Stabilizes KMT2E/MLL5 by mediating its glycosylation, thereby preventing KMT2E/MLL5 ubiquitination. Regulates circadian oscillation of the clock genes and glucose homeostasis in the liver. Stabilizes clock proteins BMAL1 and CLOCK through O-glycosylation, which prevents their ubiquitination and subsequent degradation. Promotes the CLOCK-BMAL1-mediated transcription of genes in the negative loop of the circadian clock such as PER1/2 and CRY1/2. O-glycosylates HCFC1 and regulates its proteolytic processing and transcriptional activity. Component of a THAP1/THAP3-HCFC1-OGT complex that is required for the regulation of the transcriptional activity of RRM1. Regulates mitochondrial motility in neurons by mediating glycosylation of TRAK1. Promotes autophagy by mediating O-glycosylation of ATG4B. Acts as a regulator of mTORC1 signaling by mediating O-glycosylation of RPTOR and FNIP1: O-GlcNAcylation of RPTOR in response to glucose sufficiency promotes activation of the mTORC1 complex. Its function is as follows. Catalyzes the transfer of a single N-acetylglucosamine from UDP-GlcNAc to a serine or threonine residue. Acts on cytoplasmic and nuclear proteins resulting in their modification with a beta-linked N-acetylglucosamine (O-GlcNAc). Glycosylates a large and diverse number of proteins including histone H2B, AKT1, ATG4B, EZH2, PFKL, KMT2E/MLL5, MAPT/TAU, NOD2 and HCFC1. Can regulate their cellular processes via cross-talk between glycosylation and phosphorylation or by affecting proteolytic processing. Probably by glycosylating KMT2E/MLL5, stabilizes KMT2E/MLL5 by preventing its ubiquitination. Involved in insulin resistance in muscle and adipocyte cells via glycosylating insulin signaling components and inhibiting the 'Thr-308' phosphorylation of AKT1, enhancing IRS1 phosphorylation and attenuating insulin signaling. Involved in glycolysis regulation by mediating glycosylation of 6-phosphofructokinase PFKL, inhibiting its activity. Component of a THAP1/THAP3-HCFC1-OGT complex that is required for the regulation of the transcriptional activity of RRM1. Plays a key role in chromatin structure by mediating O-GlcNAcylation of 'Ser-112' of histone H2B: recruited to CpG-rich transcription start sites of active genes via its interaction with TET proteins (TET1, TET2 or TET3). As part of the NSL complex indirectly involved in acetylation of nucleosomal histone H4 on several lysine residues. O-GlcNAcylation of 'Ser-75' of EZH2 increases its stability, and facilitating the formation of H3K27me3 by the PRC2/EED-EZH2 complex. Regulates circadian oscillation of the clock genes and glucose homeostasis in the liver. Stabilizes clock proteins BMAL1 and CLOCK through O-glycosylation, which prevents their ubiquitination and subsequent degradation. Promotes the CLOCK-BMAL1-mediated transcription of genes in the negative loop of the circadian clock such as PER1/2 and CRY1/2. O-glycosylates HCFC1 and regulates its proteolytic processing and transcriptional activity. Regulates mitochondrial motility in neurons by mediating glycosylation of TRAK1. Glycosylates HOXA1. O-glycosylates FNIP1. Promotes autophagy by mediating O-glycosylation of ATG4B. The protein is UDP-N-acetylglucosamine--peptide N-acetylglucosaminyltransferase 110 kDa subunit (OGT) of Oryctolagus cuniculus (Rabbit).